The primary structure comprises 1662 residues: MATDGASCEPDLSRAPEDAAGAAAEAAKKEFDVDTLSKSELRMLLSVMEGELEARDLVIEALRARRKEVFIQERYGRFNLNDPFLALQRDYEAGAGDKEKPVCTNPLSILEAVMAHCRKMQERMSAQLAAAESRQKKLEMEKLQLQALEQEHKKLAARLEEERGKNKQVVLMLVKECKQLSGRVIEEAQKLEDIMAKLEEEKKKTNELEEELSAEKRRSSEMEAQMEKQLSEFDTEREQLRAKLNREEAHTTDLKEEIDKMKKMIEQLKRGSDSKPSLSLPRKTKDRRLVSISVGTEGTVMRSVACQTDLVTESADHVKKLPLTMPVKPSTGSPLASANAKGSVCSSAAMARPGIDRQASHGDLIGVSVPAFPPSSANRIEENGPSTGSTPDPTSSIPPLPSNAAPSTAQTPGITPQNSQAPPMHSLHSPCANASLHPGLNPRIQAARFRFQGNANDPDQNGNTTQSPPSRDVSPTSRDNLVAKQLARNTVTQALSRFTGPQAGAPPRPGAPPTGDVSTHPSVGRTSVKTHGIARVDRGNPPPIPPKKPGLSQTPSPPHPQLKVIIDSSRASNTGAKGDNKTVASPPSSLPQGNRVINEENLPKSSSPQLPPKPSIDLTVAPAGCAVSALATSQVGAWPAATPGLNQPACSDSSLIIPTTIAFCSSINPVSASSCRPGASDSLLVTASGWSPSLTPLLMSGGPAPLAGRPTLLQQAAAQGNVTLLSMLLNEEGLDINYSCEDGHSALYSAAKNGHTDCVRLLLSAEAQVNAADKNGFTPLCAAAAQGHFECVELLIAYDANINHAADGGQTPLYLACKNGNKECIRLLLEAGTDRSVKTTDGWTPVHAAVDTGNVDSLKLLMYHRVPAHGNSFSEEESESGVFDLDEGEESPEGKSKPVVTADFINHANREGWTAAHIAASKGFKNCLEILCRHGGLETERRDKCNRTVHDVATDDCKHLLENLNALKIPLRISVGEIEPSNYGSDDFECENTICALNIRKQTSWDDFSKAVSQALTNHFQAISSDGWWSLEDMTCNNTTDSNIGLSARSIRSITLGNVPWSVGQSFVQSPWDFMIKNKAEHITVLLSGPQEGCLSSVTYASMIPLKMMQNYLRLVEQYHNVIFHGPEGSLQDYIVHQLALCLKHRQMAAGFSCEIVKAEVDAGFSKKQLLDLFISSACLIPVKQSPVKKKIIIILENLEKSSLFELLRDFLAPLENRSTESPCTFHKGNGMSECYYFHENCFLMGTIAKACLQGSDLLVQQHFRWVQLRWDGEPMQGLLQRFLRRKVVNKFRGQVPPPCDPVCKIVDWALSVWRQLNSCLSRLGTPEALLGPKYFLSCPVVPGHAQVTVKWMSKLWNGVITPRVQEAILSRASVKRQAGFRQTIAKRHPSQGQQAVVKAALSILLNKAVLHGCPLPRAELEQHRADFKGGSFPLSIVSSYNSCSKKKGESGAWRKVNTSPRRKSGRFSLPTWNKPDLSTEGIKNKTLSQLNCNRNASLSKQMSLENDVSLTLNLDQRLSLGSDDEADLVKELQSMCSSKSESDISKIADSRDDLRMFDSSGNNPVFSATINNLRMPVSQKEVCPLSSHHTTECSNSKSKTELGVSRVKSFLPVPRSKVTQCSQNTKRSSSSSNTRQIEINNNSKEENWNLHKNEHLEKPNK.

Disordered regions lie at residues 1–23 (MATD…AGAA), 202–235 (KKKT…EFDT), 365–439 (IGVS…LHPG), and 453–477 (GNAN…SPTS). The stretch at 118–275 (RKMQERMSAQ…EQLKRGSDSK (158 aa)) forms a coiled coil. Positions 385-395 (PSTGSTPDPTS) are enriched in low complexity. Residues 404–421 (AAPSTAQTPGITPQNSQA) show a composition bias toward polar residues. The residue at position 497 (arginine 497) is an Asymmetric dimethylarginine. The interval 498 to 615 (FTGPQAGAPP…SSPQLPPKPS (118 aa)) is disordered. Composition is skewed to polar residues over residues 516–529 (DVST…TSVK) and 582–592 (TVASPPSSLPQ). 5 ANK repeats span residues 708–738 (GRPT…DINY), 742–771 (DGHS…QVNA), 775–804 (NGFT…NINH), 808–837 (GGQT…DRSV), and 841–870 (DGWT…PAHG). The segment at 871–897 (NSFSEEESESGVFDLDEGEESPEGKSK) is disordered. Over residues 874–891 (SEEESESGVFDLDEGEES) the composition is skewed to acidic residues. An ANK 6 repeat occupies 911-941 (EGWTAAHIAASKGFKNCLEILCRHGGLETER). A disordered region spans residues 1446-1473 (KKKGESGAWRKVNTSPRRKSGRFSLPTW). A Phosphoserine modification is found at serine 1523. The interval 1614 to 1662 (VPRSKVTQCSQNTKRSSSSSNTRQIEINNNSKEENWNLHKNEHLEKPNK) is disordered. Positions 1623–1637 (SQNTKRSSSSSNTRQ) are enriched in low complexity. The segment covering 1644 to 1662 (SKEENWNLHKNEHLEKPNK) has biased composition (basic and acidic residues).

In terms of assembly, interacts with CTTN/cortactin SH3 domain. Interacts with STRN, STRN4/zinedin and MOB4/phocein; this interactions mediate the association with the STRIPAK core complex and may regulate dendritic spine distribution of the STRIPAK complex in hippocampal neurons. Activation of glutamate receptors weakens the interaction with STRN and STRN4.

The protein resides in the cytoplasm. It localises to the cell cortex. The protein localises to the cell projection. It is found in the dendritic spine. Its function is as follows. Regulates the dendritic spine distribution of CTTN/cortactin in hippocampal neurons, and thus controls dendritic spinogenesis and dendritic spine maintenance. Associates with the striatin-interacting phosphatase and kinase (STRIPAK) core complex to regulate dendritic spine distribution of the STRIPAK complex in hippocampal neurons. In Callithrix jacchus (White-tufted-ear marmoset), this protein is Cortactin-binding protein 2 (CTTNBP2).